The chain runs to 562 residues: Arginine--tRNA ligase (562 aa).

The 'HIGH' region motif lies at 129-139; it reads ANPTGPLHVGH.

This sequence belongs to the class-I aminoacyl-tRNA synthetase family. In terms of assembly, monomer.

Its subcellular location is the cytoplasm. It carries out the reaction tRNA(Arg) + L-arginine + ATP = L-arginyl-tRNA(Arg) + AMP + diphosphate. The protein is Arginine--tRNA ligase of Xanthomonas oryzae pv. oryzae (strain KACC10331 / KXO85).